A 442-amino-acid chain; its full sequence is Kelch domain-containing protein 10 (442 aa).

The segment at methionine 1–lysine 58 is disordered. Arginine 13 is subject to Omega-N-methylarginine. Gly residues predominate over residues glycine 15–threonine 39. Kelch repeat units lie at residues arginine 87–leucine 154, alanine 155–serine 198, cysteine 199–arginine 260, tyrosine 261–histidine 319, serine 320–valine 364, and tyrosine 365–proline 403. The segment at valine 401–lysine 442 is interaction with CUL2.

This sequence belongs to the KLHDC10 family. As to quaternary structure, component of a CRL2 E3 ubiquitin-protein ligase complex, also named ECS (Elongin BC-CUL2/5-SOCS-box protein) complex, composed of CUL2, Elongin BC (ELOB and ELOC), RBX1 and substrate-specific adapter KLHDC10. Interacts (via the 6 Kelch repeats) with PPP5C.

The protein localises to the nucleus. It is found in the cytoplasm. Its pathway is protein modification; protein ubiquitination. Functionally, substrate-recognition component of a Cul2-RING (CRL2) E3 ubiquitin-protein ligase complex of the DesCEND (destruction via C-end degrons) pathway, which recognizes a C-degron located at the extreme C-terminus of target proteins, leading to their ubiquitination and degradation. The C-degron recognized by the DesCEND pathway is usually a motif of less than ten residues and can be present in full-length proteins, truncated proteins or proteolytically cleaved forms. The CRL2(KLHDC10) complex specifically recognizes proteins with a proline-glycine (Pro-Gly) or an alanine tail (CAT tail) at the C-terminus, leading to their ubiquitination and degradation. The CRL2(KLHDC10) complex is involved in the ribosome-associated quality control (RQC) pathway, which mediates the extraction of incompletely synthesized nascent chains from stalled ribosomes: CRL2(KLHDC10) acts downstream of NEMF and recognizes CAT tails associated with stalled nascent chains, leading to their ubiquitination and degradation. Participates in the oxidative stress-induced cell death through MAP3K5 activation. Inhibits PPP5C phosphatase activity on MAP3K5. Acts as a regulator of necroptosis. The chain is Kelch domain-containing protein 10 (KLHDC10) from Bos taurus (Bovine).